The chain runs to 95 residues: Co-chaperonin GroES (95 aa).

The protein belongs to the GroES chaperonin family. In terms of assembly, heptamer of 7 subunits arranged in a ring. Interacts with the chaperonin GroEL.

The protein localises to the cytoplasm. In terms of biological role, together with the chaperonin GroEL, plays an essential role in assisting protein folding. The GroEL-GroES system forms a nano-cage that allows encapsulation of the non-native substrate proteins and provides a physical environment optimized to promote and accelerate protein folding. GroES binds to the apical surface of the GroEL ring, thereby capping the opening of the GroEL channel. In Desulforapulum autotrophicum (strain ATCC 43914 / DSM 3382 / VKM B-1955 / HRM2) (Desulfobacterium autotrophicum), this protein is Co-chaperonin GroES.